The primary structure comprises 424 residues: MDMPPTPLPPETANTSPAPNGATAGIRVENCYVFKSRLQEYAQKTGLQTPEYHTFKEGPSHEPVFKSTVVINNTSYDSLPGFFNRKAAEQSAAEVALMEIVKSIPANANIPAVQETGLCKNLLQEYAQKMNYAIPSYICTKSASGLAPFICTVEIGGIQYIGAAARTKKDAEIKAARTALLAIQGQSEGSANGATKYIVVPGKRVGKEVEKRPIETPKPLKVKKGGFKKKWNKRKFMKKDGQAVDVEKDEARVAGDAHDSDVLMQPTVITQEASCGTLFLQPCEEAKRVEAEPPRDIEMVQPDKENQHSDAALVQPDDEARVEQEPSRDISVVQPNEEAISGKQEPSIDAAILQPKEEASSVKQEPFIDTAMLQACKEAGSVELGPARDTVISQLNEQDRAVKQEPAGDIVVPQPDVHARVVKE.

The span at 1 to 10 (MDMPPTPLPP) shows a compositional bias: pro residues. The interval 1 to 22 (MDMPPTPLPPETANTSPAPNGA) is disordered. 2 DRBM domains span residues 33–102 (VFKS…EIVK) and 118–185 (LCKN…AIQG). 2 stretches are compositionally biased toward basic and acidic residues: residues 287–308 (KRVEAEPPRDIEMVQPDKENQH) and 318–328 (DEARVEQEPSR). Positions 287 to 330 (KRVEAEPPRDIEMVQPDKENQHSDAALVQPDDEARVEQEPSRDI) are disordered.

Its function is as follows. Binds double-stranded RNA. This chain is Double-stranded RNA-binding protein 8 (DRB8), found in Oryza sativa subsp. japonica (Rice).